A 195-amino-acid chain; its full sequence is Protein GrpE (195 aa).

Belongs to the GrpE family. Homodimer.

The protein localises to the cytoplasm. Functionally, participates actively in the response to hyperosmotic and heat shock by preventing the aggregation of stress-denatured proteins, in association with DnaK and GrpE. It is the nucleotide exchange factor for DnaK and may function as a thermosensor. Unfolded proteins bind initially to DnaJ; upon interaction with the DnaJ-bound protein, DnaK hydrolyzes its bound ATP, resulting in the formation of a stable complex. GrpE releases ADP from DnaK; ATP binding to DnaK triggers the release of the substrate protein, thus completing the reaction cycle. Several rounds of ATP-dependent interactions between DnaJ, DnaK and GrpE are required for fully efficient folding. The polypeptide is Protein GrpE (Blochmanniella pennsylvanica (strain BPEN)).